Consider the following 451-residue polypeptide: Tol-Pal system protein TolB 1 (451 aa).

Positions 1 to 19 are cleaved as a signal peptide; it reads MTLRMLFAFALLAAAPAQA. Positions 18-29 are enriched in low complexity; sequence QAQQTEPQPAEE. 2 disordered regions span residues 18 to 37 and 431 to 451; these read QAQQ…GTVS and NERR…PLLP.

This sequence belongs to the TolB family. The Tol-Pal system is composed of five core proteins: the inner membrane proteins TolA, TolQ and TolR, the periplasmic protein TolB and the outer membrane protein Pal. They form a network linking the inner and outer membranes and the peptidoglycan layer.

The protein localises to the periplasm. In terms of biological role, part of the Tol-Pal system, which plays a role in outer membrane invagination during cell division and is important for maintaining outer membrane integrity. The sequence is that of Tol-Pal system protein TolB 1 from Novosphingobium aromaticivorans (strain ATCC 700278 / DSM 12444 / CCUG 56034 / CIP 105152 / NBRC 16084 / F199).